A 247-amino-acid polypeptide reads, in one-letter code: ATP synthase subunit a, chloroplastic (247 aa).

A run of 5 helical transmembrane segments spans residues Gln-38–Val-58, Val-95–Leu-115, Ile-134–Ser-154, Leu-199–Leu-219, and Gly-220–Gly-240.

The protein belongs to the ATPase A chain family. F-type ATPases have 2 components, CF(1) - the catalytic core - and CF(0) - the membrane proton channel. CF(1) has five subunits: alpha(3), beta(3), gamma(1), delta(1), epsilon(1). CF(0) has four main subunits: a, b, b' and c.

The protein resides in the plastid. Its subcellular location is the chloroplast thylakoid membrane. Key component of the proton channel; it plays a direct role in the translocation of protons across the membrane. The protein is ATP synthase subunit a, chloroplastic of Oryza sativa subsp. indica (Rice).